The chain runs to 360 residues: D-alanine--D-alanine ligase (360 aa).

The region spanning 146 to 352 (KLCVADAGIA…YRNLITRLLE (207 aa)) is the ATP-grasp domain. 179–234 (EAQVSYPLFVKPASLGSSIGISKVHNREELHPALQAACALDWKVVVESTVKGREIE) serves as a coordination point for ATP. Residues Asp-305, Glu-319, and Asn-321 each contribute to the Mg(2+) site.

Belongs to the D-alanine--D-alanine ligase family. Mg(2+) serves as cofactor. Mn(2+) is required as a cofactor.

The protein resides in the cytoplasm. The catalysed reaction is 2 D-alanine + ATP = D-alanyl-D-alanine + ADP + phosphate + H(+). It participates in cell wall biogenesis; peptidoglycan biosynthesis. Cell wall formation. The protein is D-alanine--D-alanine ligase of Chlorobium chlorochromatii (strain CaD3).